A 440-amino-acid chain; its full sequence is 23S rRNA (uracil(1939)-C(5))-methyltransferase RlmD (440 aa).

A disordered region spans residues 1-21; that stretch reads MRRRTSPRRTTTSKPQPIGPI. Residues 15–73 form the TRAM domain; the sequence is PQPIGPIQTFEVDGLTHEAKGVARLQGKVTFIEGALPGETVEAQVNKAGRRFDEAVLVN. Residues Cys-86, Cys-92, Cys-95, and Cys-169 each contribute to the [4Fe-4S] cluster site. Residues Gln-273, Phe-302, Asn-307, Glu-323, Asp-350, and Asp-370 each contribute to the S-adenosyl-L-methionine site. The active-site Nucleophile is the Cys-396.

Belongs to the class I-like SAM-binding methyltransferase superfamily. RNA M5U methyltransferase family. RlmD subfamily.

The catalysed reaction is uridine(1939) in 23S rRNA + S-adenosyl-L-methionine = 5-methyluridine(1939) in 23S rRNA + S-adenosyl-L-homocysteine + H(+). Its function is as follows. Catalyzes the formation of 5-methyl-uridine at position 1939 (m5U1939) in 23S rRNA. In Marinomonas sp. (strain MWYL1), this protein is 23S rRNA (uracil(1939)-C(5))-methyltransferase RlmD.